Reading from the N-terminus, the 393-residue chain is uncharacterized protein (393 aa).

Residues 12-70 (APLLGSKIKLNIEKLAIGGAGVARHEGMVVFVPQAAPNEEILAEITLVKKNFMEARVVE) enclose the TRAM domain. 4 residues coordinate [4Fe-4S] cluster: cysteine 83, cysteine 89, cysteine 92, and cysteine 166. S-adenosyl-L-methionine-binding residues include glutamine 221, tyrosine 250, glutamate 273, and aspartate 316. Cysteine 343 (nucleophile) is an active-site residue.

Belongs to the class I-like SAM-binding methyltransferase superfamily. RNA M5U methyltransferase family.

This is an uncharacterized protein from Bdellovibrio bacteriovorus (strain ATCC 15356 / DSM 50701 / NCIMB 9529 / HD100).